A 644-amino-acid chain; its full sequence is Phosphatidylinositol polyphosphate 5-phosphatase type IV (644 aa).

A disordered region spans residues 1 to 193 (MPSKAENLRP…RLPSLLPPRP (193 aa)). 8 consecutive repeat copies span residues 10-13 (PSEP), 15-18 (PQPP), 28-31 (PGAP), 39-42 (PPDV), 55-58 (PATP), 69-71 (PIA), 72-74 (PRP), and 75-78 (PARP). Positions 10–242 (PSEPAPQPPE…SLGPGRPRSP (233 aa)) are 13 X 4 AA repeats of P-X-X-P. Basic and acidic residues predominate over residues 78-90 (PRLERALSLDDKG). Ser-99 is modified (phosphoserine). The segment covering 107–118 (NGTSPSRGSVQS) has biased composition (polar residues). Repeat unit 9 spans residues 121-124 (PGAP). Residues 152 to 163 (GSPSSGGNPLSG) show a composition bias toward low complexity. 4 repeat units span residues 169–172 (PNLP), 183–185 (PRL), 190–193 (PPRP), and 236–239 (PGRP). Phosphoserine is present on residues Ser-241 and Ser-256. Cysteine methyl ester is present on Cys-641. Cys-641 is lipidated: S-farnesyl cysteine. Residues 642–644 (SVS) constitute a propeptide, removed in mature form.

The protein belongs to the inositol polyphosphate 5-phosphatase family. As to quaternary structure, interacts (when prenylated) with PDE6D; this is important for normal location in cilia.

Its subcellular location is the cytoplasm. The protein resides in the cytoskeleton. It is found in the cilium axoneme. The protein localises to the golgi apparatus. It localises to the golgi stack membrane. Its subcellular location is the cell membrane. The protein resides in the cell projection. It is found in the ruffle. The protein localises to the nucleus. It carries out the reaction a 1,2-diacyl-sn-glycero-3-phospho-(1D-myo-inositol-4,5-bisphosphate) + H2O = a 1,2-diacyl-sn-glycero-3-phospho-(1D-myo-inositol 4-phosphate) + phosphate. It catalyses the reaction a 1,2-diacyl-sn-glycero-3-phospho-(1D-myo-inositol-3,4,5-trisphosphate) + H2O = a 1,2-diacyl-sn-glycero-3-phospho-(1D-myo-inositol-3,4-bisphosphate) + phosphate. The enzyme catalyses a 1,2-diacyl-sn-glycero-3-phospho-(1D-myo-inositol-3,5-bisphosphate) + H2O = a 1,2-diacyl-sn-glycero-3-phospho-(1D-myo-inositol-3-phosphate) + phosphate. Functionally, phosphatidylinositol (PtdIns) phosphatase that specifically hydrolyzes the 5-phosphate of phosphatidylinositol-3,4,5-trisphosphate (PtdIns(3,4,5)P3), phosphatidylinositol 4,5-bisphosphate(PtdIns(4,5)P2) and phosphatidylinositol 3,5-bisphosphate (PtdIns(3,5)P2). Specific for lipid substrates, inactive towards water soluble inositol phosphates. Plays an essential role in the primary cilium by controlling ciliary growth and phosphoinositide 3-kinase (PI3K) signaling and stability. The protein is Phosphatidylinositol polyphosphate 5-phosphatase type IV (INPP5E) of Pan troglodytes (Chimpanzee).